A 398-amino-acid chain; its full sequence is Argininosuccinate synthase (398 aa).

ATP contacts are provided by residues 9-17 (AYSGGLDTS) and A36. Residues Y87 and S92 each coordinate L-citrulline. Position 117 (G117) interacts with ATP. Positions 119, 123, and 124 each coordinate L-aspartate. Residue N123 coordinates L-citrulline. 5 residues coordinate L-citrulline: R127, S176, S185, E261, and Y273.

It belongs to the argininosuccinate synthase family. Type 1 subfamily. In terms of assembly, homotetramer.

It is found in the cytoplasm. The enzyme catalyses L-citrulline + L-aspartate + ATP = 2-(N(omega)-L-arginino)succinate + AMP + diphosphate + H(+). It functions in the pathway amino-acid biosynthesis; L-arginine biosynthesis; L-arginine from L-ornithine and carbamoyl phosphate: step 2/3. The sequence is that of Argininosuccinate synthase from Desulfotalea psychrophila (strain LSv54 / DSM 12343).